A 349-amino-acid chain; its full sequence is Phosphoribosylformylglycinamidine cyclo-ligase (349 aa).

This sequence belongs to the AIR synthase family.

The protein resides in the cytoplasm. It carries out the reaction 2-formamido-N(1)-(5-O-phospho-beta-D-ribosyl)acetamidine + ATP = 5-amino-1-(5-phospho-beta-D-ribosyl)imidazole + ADP + phosphate + H(+). It functions in the pathway purine metabolism; IMP biosynthesis via de novo pathway; 5-amino-1-(5-phospho-D-ribosyl)imidazole from N(2)-formyl-N(1)-(5-phospho-D-ribosyl)glycinamide: step 2/2. This Methanococcus maripaludis (strain DSM 14266 / JCM 13030 / NBRC 101832 / S2 / LL) protein is Phosphoribosylformylglycinamidine cyclo-ligase.